The following is an 822-amino-acid chain: MSSKRPCSIVGSFWMLWIWTATSMVARAVILHPNETIFNDFCKKSTTCEVLKYNTCLGSPLPYTHTSLILAEDSETQEEAFEKLAMWSGLRNAPRCWAVIQPLLCAVYMPKCENGKVELPSQHLCQATRNPCSIVERERGWPNFLKCENKEQFPKGCQNEVQKLKFNTSGQCEAPLVKTDIQASWYKDVEGCGIQCDNPLFTEDEHSDMHSYIAVFGTITLLCTFFTLATFLADWKNSNRYPAVILFYVNACFFIGSIGWLAQFMDGARNEIVCKSDNTMRLGEPSSTETLSCVIIFVIVYYSLMSGVIWFVMLTYAWHTSFKALGTTHQPLSGKTSYFHLVTWSIPFILTVAILANSQVDADSVSGICFVGYRYYEYRAGFVLAPIGFVLVIGGYFLIRGVMTLFSIKSNHPGLLSEKAASKINETMLRLGIFGFLAFGFVLITFGCHFYDFFNQAEWERSFREYVLCEANVTIAHQTNKPIPECAIKNRPSLLVGKINLFSMFGTGIAMSTWVWTKATILIWKRTWFRIIGRSDDEPKRIKKSKMIAKAFSKRKELQKDPEKELSFSMHTVSHEGPVAGINFDLNEPSIEMSSAWAQHVTKMVARRGAILPQDISVTPTGTPIPPPEERNKLWMVEAEISPEMMKRKKKKKKRRKEVRPAGPAADEGNPAYHRREFGPSAVPRLPKLPGHRSLVANLWEQQRQQQEEQDMLPGAFPEFRPSCPLPYQDRYGGLGYLRNKPSSLPLANPLTLRDSMQGDLSHFQQSSWQPKGVFRHLGQEASMMDVGRTAVVPRADGRRGVQIHSRTNLMDAELLDADSDF.

The first 28 residues, 1-28 (MSSKRPCSIVGSFWMLWIWTATSMVARA), serve as a signal peptide directing secretion. At 29–212 (VILHPNETIF…EDEHSDMHSY (184 aa)) the chain is on the extracellular side. N34 carries an N-linked (GlcNAc...) asparagine glycan. 5 cysteine pairs are disulfide-bonded: C42–C157, C48–C112, C56–C105, C96–C132, and C125–C147. One can recognise an FZ domain in the interval 43–160 (KKSTTCEVLK…EQFPKGCQNE (118 aa)). D73 provides a ligand contact to cholesterol. N-linked (GlcNAc...) asparagine glycosylation occurs at N167. Cystine bridges form between C172–C192, C196–C274, and C293–C369. The helical transmembrane segment at 213 to 233 (IAVFGTITLLCTFFTLATFLA) threads the bilayer. Over 234-241 (DWKNSNRY) the chain is Cytoplasmic. The chain crosses the membrane as a helical span at residues 242–262 (PAVILFYVNACFFIGSIGWLA). Topologically, residues 263 to 293 (QFMDGARNEIVCKSDNTMRLGEPSSTETLSC) are extracellular. A helical transmembrane segment spans residues 294–314 (VIIFVIVYYSLMSGVIWFVML). At 315–335 (TYAWHTSFKALGTTHQPLSGK) the chain is on the cytoplasmic side. The helical transmembrane segment at 336–356 (TSYFHLVTWSIPFILTVAILA) threads the bilayer. The Extracellular segment spans residues 357 to 381 (NSQVDADSVSGICFVGYRYYEYRAG). A cholesterol-binding site is contributed by Y373. The chain crosses the membrane as a helical span at residues 382–402 (FVLAPIGFVLVIGGYFLIRGV). Topologically, residues 403-430 (MTLFSIKSNHPGLLSEKAASKINETMLR) are cytoplasmic. Residues 431–451 (LGIFGFLAFGFVLITFGCHFY) traverse the membrane as a helical segment. The Extracellular segment spans residues 452–503 (DFFNQAEWERSFREYVLCEANVTIAHQTNKPIPECAIKNRPSLLVGKINLFS). A disulfide bridge links C469 with C486. An N-linked (GlcNAc...) asparagine glycan is attached at N472. Residues 504-524 (MFGTGIAMSTWVWTKATILIW) traverse the membrane as a helical segment. The Cytoplasmic segment spans residues 525–822 (KRTWFRIIGR…AELLDADSDF (298 aa)). Residues 645–687 (MMKRKKKKKKRRKEVRPAGPAADEGNPAYHRREFGPSAVPRLP) form a disordered region. Over residues 647–658 (KRKKKKKKRRKE) the composition is skewed to basic residues.

It belongs to the G-protein coupled receptor Fz/Smo family. In terms of assembly, monomer.

It is found in the cell membrane. The protein resides in the cell projection. It localises to the cilium. Functionally, g protein-coupled receptor which associates with the patched protein (ptch) to transduce Hedgehog protein signaling. Binding of sonic hedgehog (shh) to its receptor patched prevents inhibition of smoothened (smo) by patched. When active, smo binds to and sequesters protein kinase A catalytic subunit prkaca at the cell membrane, preventing prkaca-mediated phosphorylation of gli transcription factors which releases the gli proteins from prkaca-mediated inhibition and allows for transcriptional activation of Hedgehog signaling pathway target genes. Required for the development of primary and secondary motoneurons but not for the specification of midbrain dopaminergic neurons or development of the medial floor plate. Required for induction of lateral floor plate and posterior motoneurons, anterior neural plate patterning, dorsoventral forebrain patterning, dorsoventral retinal patterning, optic stalk development, and formation of the forebrain primary axonal scaffold. Required to regulate the formation of a subset of cerebellar neurons by limiting wnt1 expression which controls cerebellar expression of transcription factor olig2. Required for development of the pancreas. Required for muscle development. Required for the formation of a single continuous intestinal lumen from multiple discontinuous lumens, probably by regulating remodeling through rab11a-mediated trafficking to facilitate lumen fusion. Required for development of the adenohypophysis. Required for anteroposterior patterning of the otic vesicle. Required for development of the anterior craniofacial skeleton. Required for patterning of the caudal fin. Required during gastrulation and early somitogenesis stages to promote cardiomyocyte formation by regulating the specification of myocardial progenitors. Required for induction of arterial endothelial cell formation by repressing venous cell fate. The chain is Protein smoothened from Danio rerio (Zebrafish).